Reading from the N-terminus, the 267-residue chain is Tryptophan synthase alpha chain (267 aa).

Active-site proton acceptor residues include glutamate 49 and aspartate 60.

The protein belongs to the TrpA family. As to quaternary structure, tetramer of two alpha and two beta chains.

The enzyme catalyses (1S,2R)-1-C-(indol-3-yl)glycerol 3-phosphate + L-serine = D-glyceraldehyde 3-phosphate + L-tryptophan + H2O. The protein operates within amino-acid biosynthesis; L-tryptophan biosynthesis; L-tryptophan from chorismate: step 5/5. Functionally, the alpha subunit is responsible for the aldol cleavage of indoleglycerol phosphate to indole and glyceraldehyde 3-phosphate. In Geobacter sp. (strain M21), this protein is Tryptophan synthase alpha chain.